The chain runs to 156 residues: Large ribosomal subunit protein uL15 (156 aa).

The segment covering 1–16 (MVRRFKRAVKYRRGSR) has biased composition (basic residues). Residues 1–35 (MVRRFKRAVKYRRGSRTHGWGRVGQHRKSGGSGGK) are disordered.

The protein belongs to the universal ribosomal protein uL15 family. In terms of assembly, part of the 50S ribosomal subunit.

Its function is as follows. Binds to the 23S rRNA. The chain is Large ribosomal subunit protein uL15 from Pyrobaculum neutrophilum (strain DSM 2338 / JCM 9278 / NBRC 100436 / V24Sta) (Thermoproteus neutrophilus).